A 124-amino-acid chain; its full sequence is MCHTSCSSGCQAACVPSSCQPSCSTSSPCHTSCFTSSLCQPTCSTSSTCQATCVPVSYRPAVCLPVTYKPTLCVTPSCQSSVFLPVSYRPAVYVAPSCQSSGCYQPSCPTLVYRPISCSTSSCF.

Repeat copies occupy residues 10–13, 14–18, 19–23, 24–28, 33–38, 39–43, 44–48, 49–52, 53–57, 58–62, 63–67, 68–72, 73–77, 78–82, 83–87, 88–92, 98–102, 103–107, 108–112, and 113–117. Positions 10–117 are 20 X 5 AA approximate repeats; the sequence is CQAACVPSSC…CPTLVYRPIS (108 aa).

This sequence belongs to the KRTAP type 12 family. As to quaternary structure, interacts with hair keratins.

In terms of biological role, in the hair cortex, hair keratin intermediate filaments are embedded in an interfilamentous matrix, consisting of hair keratin-associated proteins (KRTAP), which are essential for the formation of a rigid and resistant hair shaft through their extensive disulfide bond cross-linking with abundant cysteine residues of hair keratins. The matrix proteins include the high-sulfur and high-glycine-tyrosine keratins. This is Keratin-associated protein 12-2 from Bos taurus (Bovine).